A 1578-amino-acid polypeptide reads, in one-letter code: Cilia- and flagella-associated protein 74 (1578 aa).

Residues 1–14 (MEEPTVQFSDEDLV) show a composition bias toward acidic residues. Disordered stretches follow at residues 1-21 (MEEP…PPMD) and 33-67 (EVER…TTKD). Residues 33 to 65 (EVERPSEGLEDEGSHSSAKKESKGAEKMRKSTT) are compositionally biased toward basic and acidic residues. 2 coiled-coil regions span residues 103 to 156 (RQRM…QSKI) and 330 to 378 (KYLF…RRQH).

Belongs to the CFAP74 family.

It is found in the cytoplasm. It localises to the cytoskeleton. The protein localises to the cilium axoneme. Its subcellular location is the flagellum axoneme. In terms of biological role, as part of the central apparatus of the cilium axoneme may play a role in cilium movement. May play an important role in sperm architecture and function. The protein is Cilia- and flagella-associated protein 74 of Mus musculus (Mouse).